A 276-amino-acid polypeptide reads, in one-letter code: MSNEISIKIGSLLNEVRNKKPLVHNITNYVTVNDCANILLAIGASPIMADDIKEAADITKISSALVINIGTLNERTIESMIASGKKANELNIPVVFDPVGAGASEFRNSTTKRLLEEVKISVLRGNMSEIKFISGLGSTTKGVDASENDARTGNDEGIDVAKNLAKKLQCTVAITGATDIISDGERVVILENGTKMLSNVTGTGCMTTALIGAFCGAGSDYFIGAVSGIISMGISGEIALDKAGKIGTGSFHIAIIDAISNLTSNIIEKMNKIKEI.

A substrate-binding site is contributed by methionine 48. Arginine 124 and threonine 175 together coordinate ATP. Glycine 202 is a binding site for substrate.

It belongs to the Thz kinase family. Mg(2+) is required as a cofactor.

The enzyme catalyses 5-(2-hydroxyethyl)-4-methylthiazole + ATP = 4-methyl-5-(2-phosphooxyethyl)-thiazole + ADP + H(+). It functions in the pathway cofactor biosynthesis; thiamine diphosphate biosynthesis; 4-methyl-5-(2-phosphoethyl)-thiazole from 5-(2-hydroxyethyl)-4-methylthiazole: step 1/1. Catalyzes the phosphorylation of the hydroxyl group of 4-methyl-5-beta-hydroxyethylthiazole (THZ). The chain is Hydroxyethylthiazole kinase from Clostridium beijerinckii (strain ATCC 51743 / NCIMB 8052) (Clostridium acetobutylicum).